The following is a 308-amino-acid chain: Ribosomal protein L11 methyltransferase (308 aa).

S-adenosyl-L-methionine contacts are provided by Thr-157, Gly-178, Asp-200, and Asn-243.

Belongs to the methyltransferase superfamily. PrmA family.

It is found in the cytoplasm. It catalyses the reaction L-lysyl-[protein] + 3 S-adenosyl-L-methionine = N(6),N(6),N(6)-trimethyl-L-lysyl-[protein] + 3 S-adenosyl-L-homocysteine + 3 H(+). Functionally, methylates ribosomal protein L11. The polypeptide is Ribosomal protein L11 methyltransferase (Pelotomaculum thermopropionicum (strain DSM 13744 / JCM 10971 / SI)).